Here is a 355-residue protein sequence, read N- to C-terminus: MSLPRIALDAMGGDVGVRVMIDGAAEARRRHDRFKFLLVGDETRIKAALDTHPNMRGASEILHCEDVVGGDEKPTQALRRAKTTSMGLTVNAVKQGEAGAAVSAGNTGALMAMSKLALRTMPGIDRPALAGVMPTLEEDDVVMLDLGANTEADARNLVQFAIMGAAYSRILTGREEPRVRLLNIGTEEIKGTDALRDAAAQLQDAAGLAMQFDGFVESDKINRGQVDVVVTDGFSGNIALKAIEGAARFVTDLLRNAFTSSIRSKVGFLVSRPATELLKHHLDPNNHNGAVFLGLNGVVVKSHGSANSVGVANAVAVAASLLENDLTARIASDLAELGERMWDATGGNGNGPAPK.

Belongs to the PlsX family. Homodimer. Probably interacts with PlsY.

Its subcellular location is the cytoplasm. It catalyses the reaction a fatty acyl-[ACP] + phosphate = an acyl phosphate + holo-[ACP]. The protein operates within lipid metabolism; phospholipid metabolism. In terms of biological role, catalyzes the reversible formation of acyl-phosphate (acyl-PO(4)) from acyl-[acyl-carrier-protein] (acyl-ACP). This enzyme utilizes acyl-ACP as fatty acyl donor, but not acyl-CoA. The sequence is that of Phosphate acyltransferase from Erythrobacter litoralis (strain HTCC2594).